Here is a 199-residue protein sequence, read N- to C-terminus: Transgelin-3 (199 aa).

The Calponin-homology (CH) domain occupies 24–136; it reads ADLENKLVDW…RTLMALGSVA (113 aa). At S163 the chain carries Phosphoserine. One copy of the Calponin-like repeat lies at 174–199; sequence IGLQMGSNKGASQAGMTGYGMPRQIM. Residues 178–188 show a composition bias toward polar residues; sequence MGSNKGASQAG. The disordered stretch occupies residues 178–199; sequence MGSNKGASQAGMTGYGMPRQIM.

The protein belongs to the calponin family.

The protein is Transgelin-3 (TAGLN3) of Bos taurus (Bovine).